A 332-amino-acid polypeptide reads, in one-letter code: L-lactate dehydrogenase A chain (332 aa).

The residue at position 2 (A2) is an N-acetylalanine. Position 5 is an N6-acetyllysine; alternate (K5). K5 is subject to N6-succinyllysine; alternate. Position 14 is an N6-acetyllysine (K14). Residue 29–57 (GAVGMACAISILMKDLADEVALVDVMEDK) participates in NAD(+) binding. An N6-acetyllysine; alternate modification is found at K57. A Glycyl lysine isopeptide (Lys-Gly) (interchain with G-Cter in SUMO2); alternate cross-link involves residue K57. At K81 the chain carries N6-acetyllysine. R106 provides a ligand contact to substrate. Residue K118 is modified to N6-acetyllysine; alternate. Position 118 is an N6-succinyllysine; alternate (K118). Residue K126 is modified to N6-acetyllysine. N138 lines the NAD(+) pocket. Substrate contacts are provided by N138 and R169. Residue H193 is the Proton acceptor of the active site. N6-acetyllysine is present on residues K224 and K232. A Phosphotyrosine modification is found at Y239. Residue K243 is modified to N6-acetyllysine. T248 contacts substrate. At T309 the chain carries Phosphothreonine. K318 is subject to N6-acetyllysine; alternate. The residue at position 318 (K318) is an N6-succinyllysine; alternate. T322 is modified (phosphothreonine).

This sequence belongs to the LDH/MDH superfamily. LDH family. As to quaternary structure, homotetramer. Interacts with PTEN upstream reading frame protein MP31. In terms of processing, ISGylated.

The protein resides in the cytoplasm. It catalyses the reaction (S)-lactate + NAD(+) = pyruvate + NADH + H(+). It participates in fermentation; pyruvate fermentation to lactate; (S)-lactate from pyruvate: step 1/1. Functionally, interconverts simultaneously and stereospecifically pyruvate and lactate with concomitant interconversion of NADH and NAD(+). This Bos taurus (Bovine) protein is L-lactate dehydrogenase A chain (LDHA).